A 62-amino-acid polypeptide reads, in one-letter code: Photosystem II reaction center protein Z (62 aa).

2 consecutive transmembrane segments (helical) span residues 8–28 and 41–61; these read ALVA…VAYA and WLGS…NFFV.

Belongs to the PsbZ family. As to quaternary structure, PSII is composed of 1 copy each of membrane proteins PsbA, PsbB, PsbC, PsbD, PsbE, PsbF, PsbH, PsbI, PsbJ, PsbK, PsbL, PsbM, PsbT, PsbX, PsbY, PsbZ, Psb30/Ycf12, peripheral proteins PsbO, CyanoQ (PsbQ), PsbU, PsbV and a large number of cofactors. It forms dimeric complexes.

It localises to the cellular thylakoid membrane. May control the interaction of photosystem II (PSII) cores with the light-harvesting antenna, regulates electron flow through the 2 photosystem reaction centers. PSII is a light-driven water plastoquinone oxidoreductase, using light energy to abstract electrons from H(2)O, generating a proton gradient subsequently used for ATP formation. The protein is Photosystem II reaction center protein Z of Nostoc sp. (strain PCC 7120 / SAG 25.82 / UTEX 2576).